A 75-amino-acid chain; its full sequence is Small ribosomal subunit protein bS18c (75 aa).

It belongs to the bacterial ribosomal protein bS18 family. In terms of assembly, part of the 30S ribosomal subunit.

Its subcellular location is the plastid. The protein resides in the chloroplast. In Adiantum capillus-veneris (Maidenhair fern), this protein is Small ribosomal subunit protein bS18c.